We begin with the raw amino-acid sequence, 264 residues long: Acyl-[acyl-carrier-protein]--UDP-N-acetylglucosamine O-acyltransferase (264 aa).

The protein belongs to the transferase hexapeptide repeat family. LpxA subfamily. As to quaternary structure, homotrimer.

The protein resides in the cytoplasm. It catalyses the reaction a (3R)-hydroxyacyl-[ACP] + UDP-N-acetyl-alpha-D-glucosamine = a UDP-3-O-[(3R)-3-hydroxyacyl]-N-acetyl-alpha-D-glucosamine + holo-[ACP]. Its pathway is glycolipid biosynthesis; lipid IV(A) biosynthesis; lipid IV(A) from (3R)-3-hydroxytetradecanoyl-[acyl-carrier-protein] and UDP-N-acetyl-alpha-D-glucosamine: step 1/6. Its function is as follows. Involved in the biosynthesis of lipid A, a phosphorylated glycolipid that anchors the lipopolysaccharide to the outer membrane of the cell. In Rickettsia felis (strain ATCC VR-1525 / URRWXCal2) (Rickettsia azadi), this protein is Acyl-[acyl-carrier-protein]--UDP-N-acetylglucosamine O-acyltransferase.